Reading from the N-terminus, the 114-residue chain is Large ribosomal subunit protein uL22 (114 aa).

This sequence belongs to the universal ribosomal protein uL22 family. In terms of assembly, part of the 50S ribosomal subunit.

Its function is as follows. This protein binds specifically to 23S rRNA; its binding is stimulated by other ribosomal proteins, e.g. L4, L17, and L20. It is important during the early stages of 50S assembly. It makes multiple contacts with different domains of the 23S rRNA in the assembled 50S subunit and ribosome. The globular domain of the protein is located near the polypeptide exit tunnel on the outside of the subunit, while an extended beta-hairpin is found that lines the wall of the exit tunnel in the center of the 70S ribosome. The sequence is that of Large ribosomal subunit protein uL22 from Ehrlichia canis (strain Jake).